The following is a 477-amino-acid chain: ETS translocation variant 1 (477 aa).

Position 94 is a phosphoserine (S94). A disordered region spans residues 128–178 (PQVGMRPSNPPTPSSTPVSPLHHASPNSAHTSKPDRAFPAHLPPSQPIQDS). Phosphoserine; by RPS6KA1 and RPS6KA5 occurs at positions 191 and 216. K317 participates in a covalent cross-link: Glycyl lysine isopeptide (Lys-Gly) (interchain with G-Cter in SUMO2). Residues 335-415 (LQLWQFLVAL…AGERYVYKFV (81 aa)) constitute a DNA-binding region (ETS).

The protein belongs to the ETS family. In terms of processing, sumoylated. Post-translationally, phosphorylated at Ser-191 and Ser-216 by RPS6KA1 and RPS6KA5; phosphorylation activates transcriptional activity.

The protein resides in the nucleus. Functionally, transcriptional activator that binds to DNA sequences containing the consensus pentanucleotide 5'-CGGA[AT]-3'. Required for olfactory dopaminergic neuron differentiation; may directly activate expression of tyrosine hydroxylase (TH). This chain is ETS translocation variant 1 (ETV1), found in Bos taurus (Bovine).